A 266-amino-acid chain; its full sequence is 5'-nucleotidase SurE (266 aa).

4 residues coordinate a divalent metal cation: aspartate 8, aspartate 9, serine 39, and asparagine 93.

This sequence belongs to the SurE nucleotidase family. A divalent metal cation serves as cofactor.

It is found in the cytoplasm. It catalyses the reaction a ribonucleoside 5'-phosphate + H2O = a ribonucleoside + phosphate. Its function is as follows. Nucleotidase that shows phosphatase activity on nucleoside 5'-monophosphates. The protein is 5'-nucleotidase SurE of Thermococcus gammatolerans (strain DSM 15229 / JCM 11827 / EJ3).